The sequence spans 393 residues: Elongation factor Tu (393 aa).

The tr-type G domain maps to K10–V203. A G1 region spans residues G19–T26. G19–T26 is a GTP binding site. T26 is a binding site for Mg(2+). The segment at G60 to S64 is G2. The segment at D81–G84 is G3. GTP contacts are provided by residues D81–H85 and N136–D139. The tract at residues N136 to D139 is G4. The segment at S173 to L175 is G5.

Belongs to the TRAFAC class translation factor GTPase superfamily. Classic translation factor GTPase family. EF-Tu/EF-1A subfamily. As to quaternary structure, monomer.

It is found in the cytoplasm. The enzyme catalyses GTP + H2O = GDP + phosphate + H(+). GTP hydrolase that promotes the GTP-dependent binding of aminoacyl-tRNA to the A-site of ribosomes during protein biosynthesis. This chain is Elongation factor Tu, found in Pelodictyon phaeoclathratiforme (strain DSM 5477 / BU-1).